We begin with the raw amino-acid sequence, 223 residues long: Ribonuclease T (223 aa).

One can recognise an Exonuclease domain in the interval 20–194; that stretch reads VVIDVETAGF…YDTNQTALLF (175 aa). Mg(2+)-binding residues include Asp-23, Glu-25, His-181, and Asp-186. The active-site Proton donor/acceptor is the His-181.

This sequence belongs to the RNase T family. As to quaternary structure, homodimer. It depends on Mg(2+) as a cofactor.

Trims short 3' overhangs of a variety of RNA species, leaving a one or two nucleotide 3' overhang. Responsible for the end-turnover of tRNA: specifically removes the terminal AMP residue from uncharged tRNA (tRNA-C-C-A). Also appears to be involved in tRNA biosynthesis. In Pectobacterium atrosepticum (strain SCRI 1043 / ATCC BAA-672) (Erwinia carotovora subsp. atroseptica), this protein is Ribonuclease T.